Here is a 252-residue protein sequence, read N- to C-terminus: Trans-aconitate 2-methyltransferase (252 aa).

This sequence belongs to the methyltransferase superfamily. Tam family.

It localises to the cytoplasm. The enzyme catalyses trans-aconitate + S-adenosyl-L-methionine = (E)-3-(methoxycarbonyl)pent-2-enedioate + S-adenosyl-L-homocysteine. Its function is as follows. Catalyzes the S-adenosylmethionine monomethyl esterification of trans-aconitate. The protein is Trans-aconitate 2-methyltransferase of Escherichia coli O6:K15:H31 (strain 536 / UPEC).